Consider the following 510-residue polypeptide: Portal protein (510 aa).

Belongs to the podoviridae head-to-tail connector protein family. Homododecamer.

The protein resides in the virion. In terms of biological role, forms the portal vertex of the capsid. This portal plays critical roles in head assembly, genome packaging, neck/tail attachment, and genome ejection. The portal protein multimerizes as a single ring-shaped homododecamer arranged around a central channel. The polypeptide is Portal protein (Pseudomonas phage phiKMV).